Here is a 1497-residue protein sequence, read N- to C-terminus: ABC multidrug transporter C (1497 aa).

The segment covering 1-13 (MSLLGTINPNINP) has biased composition (polar residues). Positions 1-21 (MSLLGTINPNINPERTVAGRG) are disordered. 2 N-linked (GlcNAc...) asparagine glycosylation sites follow: Asn-137 and Asn-336. The ABC transporter 1 domain maps to 158 to 412 (LEVGTLVRRI…FTNMGFECPE (255 aa)). 5 helical membrane-spanning segments follow: residues 523-543 (LTMSQLIGNFIMALVIGSVFY), 557-577 (ALLFFAVLLNAFSSALEILTL), 599-621 (AIASMLCDMPYKITNAIIFNLTL), 632-652 (GAFFVFLLFSFVTTLTMSMLF), and 665-685 (ALVPAAILILGLVIYTGFTIP). A glycan (N-linked (GlcNAc...) asparagine) is linked at Asn-762. The helical transmembrane segment at 777 to 797 (GIMFGFMFFFMFTYLTATEYI) threads the bilayer. The tract at residues 815–843 (QPTGSHDVEKSPEVSSAAKTDEASSKEAT) is disordered. The 244-residue stretch at 853-1096 (FQWKDVCYDI…LASYFERNGA (244 aa)) folds into the ABC transporter 2 domain. 889–896 (GVSGAGKT) serves as a coordination point for ATP. The next 5 membrane-spanning stretches (helical) occupy residues 1192 to 1212 (YIYSKTALCVLTALYIGFSFF), 1226 to 1246 (FSIFMLMTIFGNLVQQIMPNF), 1273 to 1293 (IIVELPWNTLMAFLIFVCWYY), 1313 to 1333 (LMFLLIWSFLLFTSTFAHMMI), and 1352 to 1372 (LCLIFCGVLAPPQSLPGFWIF). N-linked (GlcNAc...) asparagine glycosylation is present at Asn-1411. A helical membrane pass occupies residues 1464-1484 (FGIMWAYIIFNIFAAVFIYWL).

The protein belongs to the ABC transporter superfamily. ABCG family. PDR (TC 3.A.1.205) subfamily.

The protein resides in the cell membrane. The enzyme catalyses fluconazole(in) + ATP + H2O = fluconazole(out) + ADP + phosphate + H(+). It catalyses the reaction itraconazole(in) + ATP + H2O = itraconazole(out) + ADP + phosphate + H(+). It carries out the reaction voriconazole(in) + ATP + H2O = voriconazole(out) + ADP + phosphate + H(+). With respect to regulation, the efflux inhibitor FK506 impairs the transport activity. Pleiotropic ABC efflux transporter that shows a strong substrate specificity for the azole class of drugs such as lotrimazole (CLT), fluconazole (FLC), itraconazole (ITC), ketoconazole (KTC), posaconazole (POS), tebuconazole (TEBZ), and voriconazole (VRC). Is also able to transport rhodamine 6G (R-6G), a known substrate for many ABC transporters. Required for normal pathogenesis in a Galleria mellonella (greater wax moth) infection model. In Aspergillus fumigatus (strain ATCC MYA-4609 / CBS 101355 / FGSC A1100 / Af293) (Neosartorya fumigata), this protein is ABC multidrug transporter C.